Consider the following 882-residue polypeptide: Translation initiation factor IF-2 (882 aa).

The interval 57 to 211 (YIPANKTKDK…KDKSKPKVAT (155 aa)) is disordered. Residues 104–115 (TTSEKQKDKGEQ) show a composition bias toward basic and acidic residues. The span at 199-211 (RHKKDKSKPKVAT) shows a compositional bias: basic residues. The tr-type G domain maps to 381–550 (ERPPVVTIMG…LIQAEVLELK (170 aa)). The tract at residues 390–397 (GHVDHGKT) is G1. 390–397 (GHVDHGKT) provides a ligand contact to GTP. A G2 region spans residues 415–419 (GITQH). A G3 region spans residues 436–439 (DTPG). GTP is bound by residues 436 to 440 (DTPGH) and 490 to 493 (NKMD). A G4 region spans residues 490–493 (NKMD). The interval 526–528 (SAK) is G5.

It belongs to the TRAFAC class translation factor GTPase superfamily. Classic translation factor GTPase family. IF-2 subfamily.

The protein localises to the cytoplasm. In terms of biological role, one of the essential components for the initiation of protein synthesis. Protects formylmethionyl-tRNA from spontaneous hydrolysis and promotes its binding to the 30S ribosomal subunits. Also involved in the hydrolysis of GTP during the formation of the 70S ribosomal complex. The polypeptide is Translation initiation factor IF-2 (Helicobacter hepaticus (strain ATCC 51449 / 3B1)).